The chain runs to 239 residues: MGRKWANIKEKKASKDKTNSRIYAKFGIEIYVAAKSGDPDPHANQKLRFVIERAKTYNVPKHIIDRAIEKAKGTGDETYSELRYEGFGPNGSMIIVDALTNNVNRTASDVRAAYSKNGGNMGVSGSVAYMFDNTAIFGVEGKDADELLELLMEVDIDVRDILDEDGQAIIYAEPEDFHKVQEGLKAAGIEEFTVAEIEMIPQNDIQLSGEDLEKFEKLIDALEDLEDVQKVYHNVELED.

This sequence belongs to the TACO1 family. YeeN subfamily.

The protein localises to the cytoplasm. In Listeria monocytogenes serotype 4b (strain F2365), this protein is Probable transcriptional regulatory protein LMOf2365_0385.